We begin with the raw amino-acid sequence, 191 residues long: FAD-linked sulfhydryl oxidase ERV1 (191 aa).

One can recognise an ERV/ALR sulfhydryl oxidase domain in the interval 72 to 172; that stretch reads GPVTKEDLGR…FPCERVDARW (101 aa). FAD-binding residues include Lys76, Arg81, Trp84, Glu121, His125, Cys148, His151, Asn152, Asn155, Lys160, and Arg171. Cysteines 119 and 122 form a disulfide. An intrachain disulfide couples Cys148 to Cys165. Cys177 and Cys182 are oxidised to a cystine. A Required for dimerization and substrate specificity motif is present at residues 177–182; sequence CEQKSC.

Homodimer. Requires FAD as cofactor. Contains three disulfide bonds; one catalytic disulfide (Cys-119 to Cys-122), one structural disulfide (Cys-148 to Cys-165), and one shuttle disulfide (Cys-177 to Cys-182).

The protein resides in the mitochondrion. It catalyses the reaction 2 R'C(R)SH + O2 = R'C(R)S-S(R)CR' + H2O2. FAD-dependent sulfhydryl oxidase that catalyzes disulfide bond formation. Oxidizes thioredoxin in vitro. Required for the import and folding of small cysteine-containing proteins in the mitochondrial intermembrane space, and can act independently of the oxidoreductase MIA40. Can oxidize the cytochrome c oxidase assembly protein COX19, a typical substrate of MIA40. The sequence is that of FAD-linked sulfhydryl oxidase ERV1 (ERV1) from Arabidopsis thaliana (Mouse-ear cress).